A 332-amino-acid polypeptide reads, in one-letter code: HPr kinase/phosphorylase (332 aa).

Catalysis depends on residues His-153 and Lys-174. 168–175 (GKSGLGKS) provides a ligand contact to ATP. Residue Ser-175 coordinates Mg(2+). The active-site Proton acceptor; for phosphorylation activity. Proton donor; for dephosphorylation activity is Asp-192. Positions 217 to 226 (MEIRGLGVVD) are important for the catalytic mechanism of both phosphorylation and dephosphorylation. Glu-218 contributes to the Mg(2+) binding site. Arg-259 is an active-site residue. Residues 280–285 (PIFPGK) form an important for the catalytic mechanism of dephosphorylation region.

This sequence belongs to the HPrK/P family. Homohexamer. Requires Mg(2+) as cofactor.

The catalysed reaction is [HPr protein]-L-serine + ATP = [HPr protein]-O-phospho-L-serine + ADP + H(+). It carries out the reaction [HPr protein]-O-phospho-L-serine + phosphate + H(+) = [HPr protein]-L-serine + diphosphate. Functionally, catalyzes the ATP- as well as the pyrophosphate-dependent phosphorylation of a specific serine residue in HPr, a phosphocarrier protein of the phosphoenolpyruvate-dependent sugar phosphotransferase system (PTS). HprK/P also catalyzes the pyrophosphate-producing, inorganic phosphate-dependent dephosphorylation (phosphorolysis) of seryl-phosphorylated HPr (P-Ser-HPr). In Chlorobium luteolum (strain DSM 273 / BCRC 81028 / 2530) (Pelodictyon luteolum), this protein is HPr kinase/phosphorylase.